A 349-amino-acid polypeptide reads, in one-letter code: Myocyte-specific enhancer factor 2B (349 aa).

Residues 3-57 form the MADS-box domain; sequence RKKIQISRILDQRNRQVTFTKRKFGLMKKAYELSVLCDCDIALIIFNSAQRLFQY. The segment at residues 58 to 86 is a DNA-binding region (mef2-type); it reads ASSDMDRVLLKYTEYSEPHESRTNADILQ. Disordered regions lie at residues 237–317 and 330–349; these read GSFA…DFPR and AEPL…SWPR.

This sequence belongs to the MEF2 family. As to quaternary structure, heterodimer. Interacts with HDAC9. Interacts with HDAC7. In terms of tissue distribution, highest expression found in embryonic heart and skeletal muscle. Low levels found in adult spleen, lung and testis while no expression is found in adult heart, brain or skeletal muscle.

It localises to the nucleus. Functionally, transcriptional activator which binds specifically to the MEF2 element, 5'-YTA[AT](4)TAR-3', found in numerous muscle-specific genes. Activates transcription via this element. May be involved in muscle-specific and/or growth factor-related transcription. The protein is Myocyte-specific enhancer factor 2B (Mef2b) of Mus musculus (Mouse).